Consider the following 333-residue polypeptide: Gap junction alpha-4 protein (333 aa).

Residues 1–20 are Cytoplasmic-facing; the sequence is MGDWGFLEKLLDQVQEHSTV. Residues 21–40 form a helical membrane-spanning segment; the sequence is VGKIWLTVLFIFRILILGLA. At 41 to 76 the chain is on the extracellular side; sequence GESVWGDEQSDFECNTAQPGCTNVCYDQAFPISHIR. A helical transmembrane segment spans residues 77–99; it reads YWVLQFLFVSTPTLVYLGHVIYL. The Cytoplasmic portion of the chain corresponds to 100 to 148; the sequence is SRREERLRQKEGELRALPAKDPQVERALAAVERQMAKISVAEDGRLRIR. The chain crosses the membrane as a helical span at residues 149-165; the sequence is GALMGTYVASVLCKSVL. Topologically, residues 166 to 207 are extracellular; it reads EAGFLYGQWRLYGWTMEPVFVCQRAPCPYLVDCFVSRPTEKT. The helical transmembrane segment at 208–230 threads the bilayer; sequence IFIIFMLVVGLISLVLNLLELVH. Topologically, residues 231 to 333 are cytoplasmic; the sequence is LLCRCLSRGM…SSSASKKQYV (103 aa). The tract at residues 292–333 is disordered; the sequence is ANLTTEERLASSRPPLFLDPPPQNGQKPPSRPSSSASKKQYV. Positions 323-333 are enriched in low complexity; sequence PSSSASKKQYV.

The protein belongs to the connexin family. Alpha-type (group II) subfamily. A connexon is composed of a hexamer of connexins. As to expression, expressed in multiple organs and tissues, including heart, uterus, ovary, and blood vessel endothelium.

It is found in the cell membrane. The protein resides in the cell junction. It localises to the gap junction. One gap junction consists of a cluster of closely packed pairs of transmembrane channels, the connexons, through which materials of low MW diffuse from one cell to a neighboring cell. This is Gap junction alpha-4 protein (GJA4) from Homo sapiens (Human).